The primary structure comprises 451 residues: DNA polymerase delta subunit 3 (451 aa).

3 disordered regions span residues 187–241 (SQAK…AASS), 259–386 (KQTP…KVLR), and 404–451 (AWES…FAKK). Polar residues predominate over residues 200–216 (PSTSQVKEAPKASQTVE). Residues 225 to 241 (SAPAKKGSSAPKSAASS) show a composition bias toward low complexity. The span at 306–316 (QREEELRRMME) shows a compositional bias: basic and acidic residues. Over residues 329–353 (EEEEEEEEEEESEHEQLPAEEEPMA) the composition is skewed to acidic residues. Positions 354-366 (EEPKAPEPVKEEP) are enriched in basic and acidic residues. The segment covering 376–386 (GRRRGKRKVLR) has biased composition (basic residues). The short motif at 441 to 448 (QGSIMSWF) is the PIP-box element.

As to quaternary structure, component of the DNA polymerase delta complex which consists of PolD1, PolD2, PolD3 and PolD4, with PolD1 bearing DNA polymerase and 3' to 5' proofreading exonuclease activities. Directly interacts with PCNA.

It localises to the nucleus. In terms of biological role, accessory component of the DNA polymerase delta complex. The complex is required for the maintenance of genome integrity, acting in concert with the sliding clamp processivity factor PCNA. The sequence is that of DNA polymerase delta subunit 3 from Chaetomium thermophilum (strain DSM 1495 / CBS 144.50 / IMI 039719) (Thermochaetoides thermophila).